Reading from the N-terminus, the 119-residue chain is Large ribosomal subunit protein bL20 (119 aa).

Belongs to the bacterial ribosomal protein bL20 family.

In terms of biological role, binds directly to 23S ribosomal RNA and is necessary for the in vitro assembly process of the 50S ribosomal subunit. It is not involved in the protein synthesizing functions of that subunit. The sequence is that of Large ribosomal subunit protein bL20 from Syntrophus aciditrophicus (strain SB).